Reading from the N-terminus, the 1122-residue chain is Phytochrome A (1122 aa).

The span at 1 to 11 (MSGSRPTQSSE) shows a compositional bias: polar residues. The interval 1–21 (MSGSRPTQSSEGSRRSRHSAR) is disordered. Residues 218–402 (SMERLCDTMV…VFAIHVNKEV (185 aa)) enclose the GAF domain. Phytochromobilin is bound at residue C323. The 71-residue stretch at 618–688 (VTSEMVRLIE…RMLENALEGT (71 aa)) folds into the PAS 1 domain. The PAC domain maps to 695 to 747 (FEIKTHLSRADAGPISLVVNACASRDLHENVVGVCFVAHDLTGQKTVMDKFTR). In terms of domain architecture, PAS 2 spans 748–822 (IEGDYKAIIQ…KNQEAFVNLG (75 aa)). One can recognise a Histidine kinase domain in the interval 902–1119 (YIKRQIRNPL…SFIITAELAA (218 aa)).

This sequence belongs to the phytochrome family. Homodimer. Interacts with NDPK2 and PKS4. Stabilized by interactions with PAPP5 and FYPP3 which are enhanced in the phosphorylated Pfr form. Interacts with COP1/SPA1 complex. Binds, via its photosensory domain, to PTAC12/HMR when photoactivated; this interaction stimulates its localization to photobodies. Interacts with FHY1, FHL and FHY3, especially upon far-red (FR) light illumination; when underphosphorylated. Forms PHYA/FHY1/HFR1 complex. Binds to PIF3/PAP3. Phosphorylated. Post-translationally, contains one covalently linked phytochromobilin chromophore. Expressed in fruits, flowers, leaves, stems, seedlings and roots.

It is found in the cytoplasm. The protein localises to the nucleus. The protein resides in the nucleoplasm. It localises to the nucleus speckle. In terms of biological role, regulatory photoreceptor which exists in two forms that are reversibly interconvertible by light: the Pr form that absorbs maximally in the red region of the spectrum and the Pfr form that absorbs maximally in the far-red region. Photoconversion of Pr to Pfr induces an array of morphogenetic responses, whereas reconversion of Pfr to Pr cancels the induction of those responses. Pfr controls the expression of a number of nuclear genes including those encoding the small subunit of ribulose-bisphosphate carboxylase, chlorophyll A/B binding protein, protochlorophyllide reductase, rRNA, etc. It also controls the expression of its own gene(s) in a negative feedback fashion. Involved in the flowering time regulation. Can phosphorylate FHY1 and, possibly, FHL, in red light conditions; this inactivates their co-shuttling to the nucleus. Regulates phototropic responses both in the nucleus (e.g. hypocotyl elongation and cotyledon opening under high-irradiance conditions and seed germination under very-low-fluence conditions) and in the cytoplasm (e.g. negative gravitropism in blue light and red-enhanced phototropism). Promotes seed germination, suppression of hypocotyl elongation, and randomization of hypocotyl growth orientation in far-red light; these responses to far-red light are repressed by UNE10/PIF8. Stabilizes UNE10/PIF8 but sequesters PIF3/PAP3 from its target genes promoters in far-red light. This chain is Phytochrome A, found in Arabidopsis thaliana (Mouse-ear cress).